We begin with the raw amino-acid sequence, 183 residues long: MSQARFIAFSDGSALVNPGGPGGTGFVVLDRARPAYRFGGTRWVEDGPNAVTNNRMELRAVLEALEGLPGGEQVEVISDSRYVVDALSRWIHGWRKKGWRTASGEPVLNRDLIEALDARASALTVRYTWVRGHDGHAVNEVVDQLAQAAARGVAGPGEAEVVAALRAEAFLAGGSAAPRSSRA.

An RNase H type-1 domain is found at 2-151 (SQARFIAFSD…VDQLAQAAAR (150 aa)). Mg(2+) is bound by residues aspartate 11, glutamate 57, aspartate 79, and aspartate 143.

The protein belongs to the RNase H family. In terms of assembly, monomer. Mg(2+) is required as a cofactor.

It is found in the cytoplasm. It catalyses the reaction Endonucleolytic cleavage to 5'-phosphomonoester.. Functionally, endonuclease that specifically degrades the RNA of RNA-DNA hybrids. The chain is Ribonuclease H from Anaeromyxobacter dehalogenans (strain 2CP-1 / ATCC BAA-258).